The primary structure comprises 101 residues: Protein translation factor SUI1 homolog (101 aa).

This sequence belongs to the SUI1 family.

This Methanosphaera stadtmanae (strain ATCC 43021 / DSM 3091 / JCM 11832 / MCB-3) protein is Protein translation factor SUI1 homolog.